The chain runs to 1481 residues: Cystic fibrosis transmembrane conductance regulator (1481 aa).

At 1–77 the chain is on the cytoplasmic side; that stretch reads MQRSPLEKAS…KLINALRRCF (77 aa). A helical transmembrane segment spans residues 78–98; sequence FWRFMFYGILLYLGEVTKAVQ. In terms of domain architecture, ABC transmembrane type-1 1 spans 81 to 365; the sequence is FMFYGILLYL…WAVQTWYDSL (285 aa). The Extracellular portion of the chain corresponds to 99 to 122; sequence PLLLGRIIASYDPDNKVERSIAIY. Residues 123–146 form a helical membrane-spanning segment; it reads LGIGLCLLFIVRMLLLHPAIFGLH. At 147-195 the chain is on the cytoplasmic side; sequence HIGMQMRIAMFSLIYKKILKLSSRVLDKISIGQLVSLLSNNLNKFDEGL. Residues 196–216 form a helical membrane-spanning segment; that stretch reads ALAHFVWIAPLQVMLLMGLLW. The Extracellular portion of the chain corresponds to 217–222; it reads ELLQAS. A helical transmembrane segment spans residues 223–243; it reads AFCGLGFLIVLALFQSGLGRM. At 244–298 the chain is on the cytoplasmic side; that stretch reads MMKYRDQRAGKINERLVITSEMIENIQSVKAYCWEEAMEKMIENLRQTELKLTRK. Residues 299–319 form a helical membrane-spanning segment; that stretch reads AAYVRYFNSSAFFFSGFFVVF. Topologically, residues 320-339 are extracellular; sequence LSVLPYALIKGIILRKIFTT. The chain crosses the membrane as a helical span at residues 340–358; sequence ISFCIVLRMAVTRQFPWAV. Topologically, residues 359 to 858 are cytoplasmic; sequence QTWYDSLGAI…YLRYITVHKS (500 aa). Residues Trp-401, 458-465, and Gln-493 each bind ATP; that span reads GSTGAGKT. Residues 423–646 enclose the ABC transporter 1 domain; that stretch reads NGDNSLFFSN…RPDFSSKLMG (224 aa). Cys-524 is lipidated: S-palmitoyl cysteine. Residues Ser-549 and Ser-660 each carry the phosphoserine modification. The segment at 654–831 is disordered R region; it reads SAERRNSILT…EEINEEDLKE (178 aa). At Ser-670 the chain carries Phosphoserine; by PKA. Ser-686 carries the phosphoserine modification. Lys-688 participates in a covalent cross-link: Glycyl lysine isopeptide (Lys-Gly) (interchain with G-Cter in ubiquitin). Phosphoserine is present on residues Ser-700 and Ser-712. At Thr-717 the chain carries Phosphothreonine. Phosphoserine is present on residues Ser-737, Ser-768, Ser-790, Ser-795, and Ser-813. The chain crosses the membrane as a helical span at residues 859-879; it reads LIFVLIWCLVIFLAEVAVSLV. Positions 859 to 1155 constitute an ABC transmembrane type-1 2 domain; that stretch reads LIFVLIWCLV…AVNSSIDVDS (297 aa). The Extracellular segment spans residues 880–918; that stretch reads LLWLLGNAPAYNKGNSTISANSSYAVIITSTSAYYVFYI. Residues Asn-894 and Asn-900 are each glycosylated (N-linked (GlcNAc...) asparagine). Residues 919-939 form a discontinuously helical membrane-spanning segment; that stretch reads YVGVADTLLALGFFRGLPLVH. At 940–990 the chain is on the cytoplasmic side; that stretch reads TLITVSKILHHKMLHSVLQAPMSTLNALKAGGILNRFSKDIAILDDLLPLT. Residues 991–1011 form a helical membrane-spanning segment; it reads IFDFIQLLLIVIGAVAVVSVL. Residues 1012–1013 are Extracellular-facing; the sequence is QP. The chain crosses the membrane as a helical span at residues 1014-1034; it reads YIFLATVPVIVTFIILRAYFL. Topologically, residues 1035–1095 are cytoplasmic; the sequence is HTSQQLKQLE…TANWFLYLST (61 aa). Residues 1096 to 1116 traverse the membrane as a helical segment; that stretch reads LRWFQMRIEMVFVIFFIVVTF. Residues 1117–1130 are Extracellular-facing; sequence ISILTTGEGEGQVG. The chain crosses the membrane as a helical span at residues 1131–1151; sequence IILTLAMNIMGTLQWAVNSSI. The Cytoplasmic segment spans residues 1152 to 1481; sequence DVDSLMRSVS…TEEEVQDTRL (330 aa). Residues 1211 to 1444 enclose the ABC transporter 2 domain; it reads MTVKDLTARY…KSLFRQAISP (234 aa). ATP is bound by residues Tyr-1220 and 1245 to 1252; that span reads GRTGSGKS. The interaction with GORASP2 stretch occupies residues 1387-1481; it reads RTLKQAFADC…TEEEVQDTRL (95 aa). A lipid anchor (S-palmitoyl cysteine) is attached at Cys-1396. A phosphoserine mark is found at Ser-1445 and Ser-1457. The segment at 1449–1481 is disordered; the sequence is KLFPRRNSSKHKSRPPITALKEETEEEVQDTRL. Residues 1450-1462 are compositionally biased toward basic residues; the sequence is LFPRRNSSKHKSR. Positions 1471–1481 are enriched in acidic residues; sequence ETEEEVQDTRL. Residues 1479–1481 carry the PDZ-binding motif; it reads TRL.

The protein belongs to the ABC transporter superfamily. ABCC family. CFTR transporter (TC 3.A.1.202) subfamily. Monomer; does not require oligomerization for channel activity. May form oligomers in the membrane. Interacts with SLC26A3, SLC26A6 and NHERF1. Interacts with SHANK2. Interacts with MYO6. Interacts (via C-terminus) with GOPC (via PDZ domain); this promotes CFTR internalization and thereby decreases channel activity. Interacts with SLC4A7 through NHERF1. Found in a complex with MYO5B and RAB11A. Interacts with ANO1. Interacts with SLC26A8. Interacts with AHCYL1; the interaction increases CFTR activity. Interacts with CSE1L. The core-glycosylated form interacts with GORASP2 (via PDZ GRASP-type 1 domain) in respone to ER stress. Interacts with MARCHF2; the interaction leads to CFTR ubiqtuitination and degradation. Interacts with ADGRG2. Post-translationally, N-glycosylated. Phosphorylated; cAMP treatment promotes phosphorylation and activates the channel. Dephosphorylation decreases the ATPase activity (in vitro). Phosphorylation at PKA sites activates the channel. Phosphorylation at PKC sites enhances the response to phosphorylation by PKA. Phosphorylated by AMPK; this inhibits channel activity. In terms of processing, ubiquitinated, leading to its degradation in the lysosome. Deubiquitination by USP10 in early endosomes enhances its endocytic recycling to the cell membrane. Ubiquitinated by RNF185 during ER stress. Ubiquitinated by MARCHF2.

The protein localises to the apical cell membrane. Its subcellular location is the early endosome membrane. It is found in the cell membrane. The protein resides in the recycling endosome membrane. It localises to the endoplasmic reticulum membrane. The protein localises to the nucleus. The enzyme catalyses ATP + H2O + closed Cl(-) channel = ADP + phosphate + open Cl(-) channel.. It carries out the reaction chloride(in) = chloride(out). It catalyses the reaction hydrogencarbonate(in) = hydrogencarbonate(out). The catalysed reaction is ATP + H2O = ADP + phosphate + H(+). Functionally, epithelial ion channel that plays an important role in the regulation of epithelial ion and water transport and fluid homeostasis. Mediates the transport of chloride ions across the cell membrane. Possesses an intrinsic ATPase activity and utilizes ATP to gate its channel; the passive flow of anions through the channel is gated by cycles of ATP binding and hydrolysis by the ATP-binding domains. The ion channel is also permeable to HCO(3)(-); selectivity depends on the extracellular chloride concentration. Exerts its function also by modulating the activity of other ion channels and transporters. Contributes to the regulation of the pH and the ion content of the epithelial fluid layer. Modulates the activity of the epithelial sodium channel (ENaC) complex, in part by regulating the cell surface expression of the ENaC complex. May regulate bicarbonate secretion and salvage in epithelial cells by regulating the transporter SLC4A7. Can inhibit the chloride channel activity of ANO1. Plays a role in the chloride and bicarbonate homeostasis during sperm epididymal maturation and capacitation. In Microcebus murinus (Gray mouse lemur), this protein is Cystic fibrosis transmembrane conductance regulator.